A 116-amino-acid polypeptide reads, in one-letter code: MSLLMTIITITALLSTILAIVSFWLPQISPDHEKLSPYECGFDPMGSARLPFSLRFFLIAILFLLFDLEIALLLPLPWGDQLPTPLLTFTWATAVLFLLTLGLIYEWIQGGLEWAE.

Helical transmembrane passes span 3–23 (LLMT…IVSF), 56–76 (FFLI…LLPL), and 85–105 (PLLT…GLIY).

Belongs to the complex I subunit 3 family.

It localises to the mitochondrion membrane. It catalyses the reaction a ubiquinone + NADH + 5 H(+)(in) = a ubiquinol + NAD(+) + 4 H(+)(out). Functionally, core subunit of the mitochondrial membrane respiratory chain NADH dehydrogenase (Complex I) that is believed to belong to the minimal assembly required for catalysis. Complex I functions in the transfer of electrons from NADH to the respiratory chain. The immediate electron acceptor for the enzyme is believed to be ubiquinone. In Paralichthys olivaceus (Bastard halibut), this protein is NADH-ubiquinone oxidoreductase chain 3 (MT-ND3).